Reading from the N-terminus, the 444-residue chain is Methylenetetrahydrofolate--tRNA-(uracil-5-)-methyltransferase TrmFO (444 aa).

FAD is bound at residue 10–15 (GAGLAG).

Belongs to the MnmG family. TrmFO subfamily. It depends on FAD as a cofactor.

The protein resides in the cytoplasm. The enzyme catalyses uridine(54) in tRNA + (6R)-5,10-methylene-5,6,7,8-tetrahydrofolate + NADH + H(+) = 5-methyluridine(54) in tRNA + (6S)-5,6,7,8-tetrahydrofolate + NAD(+). It catalyses the reaction uridine(54) in tRNA + (6R)-5,10-methylene-5,6,7,8-tetrahydrofolate + NADPH + H(+) = 5-methyluridine(54) in tRNA + (6S)-5,6,7,8-tetrahydrofolate + NADP(+). Catalyzes the folate-dependent formation of 5-methyl-uridine at position 54 (M-5-U54) in all tRNAs. The protein is Methylenetetrahydrofolate--tRNA-(uracil-5-)-methyltransferase TrmFO of Streptococcus equi subsp. zooepidemicus (strain H70).